The primary structure comprises 136 residues: Galectin-7 (136 aa).

The Galectin domain occupies 6-136 (HKSSLPEGIR…DVQLDSVRIF (131 aa)). An a beta-D-galactoside-binding site is contributed by 70–76 (WGREERG).

Monomer. In terms of tissue distribution, mainly expressed in stratified squamous epithelium.

It localises to the cytoplasm. It is found in the nucleus. The protein resides in the secreted. In terms of biological role, could be involved in cell-cell and/or cell-matrix interactions necessary for normal growth control. Pro-apoptotic protein that functions intracellularly upstream of JNK activation and cytochrome c release. This chain is Galectin-7 (LGALS7), found in Homo sapiens (Human).